A 427-amino-acid chain; its full sequence is Tol-Pal system protein TolB (427 aa).

An N-terminal signal peptide occupies residues 1–23 (MKLLKRLVSVFAIVLAVGSNAFA).

The protein belongs to the TolB family. As to quaternary structure, the Tol-Pal system is composed of five core proteins: the inner membrane proteins TolA, TolQ and TolR, the periplasmic protein TolB and the outer membrane protein Pal. They form a network linking the inner and outer membranes and the peptidoglycan layer.

It localises to the periplasm. Its function is as follows. Part of the Tol-Pal system, which plays a role in outer membrane invagination during cell division and is important for maintaining outer membrane integrity. The chain is Tol-Pal system protein TolB from Haemophilus influenzae (strain PittGG).